The following is a 244-amino-acid chain: Orotidine 5'-phosphate decarboxylase (244 aa).

Substrate contacts are provided by residues aspartate 20, lysine 42, 70–79 (DLKFFDIPAT), threonine 125, arginine 186, glutamine 195, glycine 215, and arginine 216. The active-site Proton donor is the lysine 72.

It belongs to the OMP decarboxylase family. Type 1 subfamily. In terms of assembly, homodimer.

It carries out the reaction orotidine 5'-phosphate + H(+) = UMP + CO2. Its pathway is pyrimidine metabolism; UMP biosynthesis via de novo pathway; UMP from orotate: step 2/2. Catalyzes the decarboxylation of orotidine 5'-monophosphate (OMP) to uridine 5'-monophosphate (UMP). This Xylella fastidiosa (strain M23) protein is Orotidine 5'-phosphate decarboxylase.